A 234-amino-acid polypeptide reads, in one-letter code: Probable transcriptional regulatory protein TcrX (234 aa).

A Response regulatory domain is found at threonine 10 to leucine 124. Residue aspartate 59 is modified to 4-aspartylphosphate. The ompR/PhoB-type DNA-binding region spans glycine 135 to proline 232.

In terms of processing, phosphorylated by TcrY.

The protein resides in the cytoplasm. Member of the two-component regulatory system TcrY/TcrX. This is Probable transcriptional regulatory protein TcrX (tcrX) from Mycobacterium tuberculosis (strain ATCC 25618 / H37Rv).